The chain runs to 114 residues: Replication initiation control protein YabA (114 aa).

4 residues coordinate Zn(2+): His-84, Cys-86, Cys-102, and Cys-105.

Belongs to the YabA family. Homotetramer. Interacts with both DnaA and DnaN, acting as a bridge between these two proteins. It depends on Zn(2+) as a cofactor.

The protein resides in the cytoplasm. Its subcellular location is the nucleoid. Functionally, involved in control of chromosome replication initiation. Inhibits the cooperative binding of DnaA to the oriC region, thus negatively regulating initiation of chromosome replication. Inhibits the ability of DnaA-ATP to form a helix on DNA; does not disassemble preformed DnaA-DNA helices. Decreases the residence time of DnaA on the chromosome at its binding sites (oriC, replication forks and promoter-binding sites). Tethers DnaA to the replication machinery via the DNA polymerase beta sliding clamp subunit (dnaN). Associates with oriC and other DnaA targets on the chromosome in a DnaA-dependent manner. This chain is Replication initiation control protein YabA, found in Ligilactobacillus salivarius (strain UCC118) (Lactobacillus salivarius).